The following is a 327-amino-acid chain: Serine/threonine-protein phosphatase 4 regulatory subunit ppfr-4 (327 aa).

The stretch at lysine 141–leucine 185 forms a coiled coil. The disordered stretch occupies residues lysine 271–glycine 327. Over residues asparagine 275–alanine 284 the composition is skewed to polar residues. Positions glutamine 291 to glutamate 301 are enriched in acidic residues. Over residues alanine 302–arginine 318 the composition is skewed to basic and acidic residues.

As to quaternary structure, serine/threonine-protein phosphatase 4 (PP4) occurs in different assemblies of the catalytic and one or more regulatory subunits. The catalytic subunit is likely to be pph-4.1.

Probable regulatory subunit of serine/threonine-protein phosphatase PP4 which may play a role in meiosis and embryonic mitosis. Probably in association with catalytic subunit pph-4.1, regulates microtubule severing during oocyte meiosis II by dephosphorylating and likely activating mei-1, a component of the katanin microtubule severing complex. The sequence is that of Serine/threonine-protein phosphatase 4 regulatory subunit ppfr-4 from Caenorhabditis elegans.